The following is a 126-amino-acid chain: DNA-directed RNA polymerase 35 kDa subunit (126 aa).

The protein belongs to the poxviridae DNA-directed RNA polymerase 35 kDa subunit family. In terms of assembly, the DNA-dependent RNA polymerase used for intermediate and late genes expression consists of eight subunits 147 kDa, 133 kDa, 35 kDa, 30 kDa, 22 kDa, 19 kDa, 18 kDa and 7 kDa totalling more than 500 kDa in mass. The same holoenzyme, with the addition of the transcription-specificity factor RAP94, is used for early gene expression.

The protein resides in the virion. It carries out the reaction RNA(n) + a ribonucleoside 5'-triphosphate = RNA(n+1) + diphosphate. Its function is as follows. Part of the DNA-dependent RNA polymerase which catalyzes the transcription of viral DNA into RNA using the four ribonucleoside triphosphates as substrates. Responsible for the transcription of early, intermediate and late genes. DNA-dependent RNA polymerase associates with the early transcription factor (ETF) thereby allowing the early genes transcription. Late transcription, and probably also intermediate transcription, require newly synthesized RNA polymerase. The protein is DNA-directed RNA polymerase 35 kDa subunit (RPO35) of Ovis aries (Sheep).